A 427-amino-acid chain; its full sequence is 12-alpha,13-alpha-dihydroxyfumitremorgin C prenyltransferase (427 aa).

E94 is a binding site for substrate. Dimethylallyl diphosphate is bound by residues R105, K192, Y194, Y268, Q353, Y355, Y419, and Y423.

This sequence belongs to the tryptophan dimethylallyltransferase family.

It carries out the reaction 12alpha,13alpha-dihydroxyfumitremorgin C + dimethylallyl diphosphate = fumitremorgin B + diphosphate. The protein operates within mycotoxin biosynthesis. Functionally, 12-alpha,13-alpha-dihydroxyfumitremorgin C prenyltransferase; part of the gene cluster that mediates the biosynthesis of fumitremorgins, indole alkaloids that carry not only intriguing chemical structures, but also interesting biological and pharmacological activities. The biosynthesis of fumitremorgin-type alkaloids begins by condensation of the two amino acids L-tryptophan and L-proline to brevianamide F, catalyzed by the non-ribosomal peptide synthetase ftmA. Brevianamide F is then prenylated by the prenyltransferase ftmPT1/ftmB in the presence of dimethylallyl diphosphate, resulting in the formation of tryprostatin B. The three cytochrome P450 monooxygenases, ftmP450-1/ftmC, ftmP450-2/ftmE and ftmP450-3/FtmG, are responsible for the conversion of tryprostatin B to 6-hydroxytryprostatin B, tryprostatin A to fumitremorgin C and fumitremorgin C to 12,13-dihydroxyfumitremorgin C, respectively. The putative methyltransferase ftmMT/ftmD is expected for the conversion of 6-hydroxytryprostatin B to tryprostatin A. FtmPT2/FtmH catalyzes the prenylation of 12,13-dihydroxyfumitre-morgin C in the presence of dimethylallyl diphosphate, resulting in the formation of fumitremorgin B. Fumitremorgin B is further converted to verruculogen by ftmOx1/ftmF via the insertion of an endoperoxide bond between the two prenyl moieties. In some fungal species, verruculogen is further converted to fumitremorgin A, but the enzymes involved in this step have not been identified yet. The protein is 12-alpha,13-alpha-dihydroxyfumitremorgin C prenyltransferase of Aspergillus fumigatus (Neosartorya fumigata).